The chain runs to 205 residues: Large ribosomal subunit protein uL4 (205 aa).

Positions lysine 44–serine 77 are disordered. The span at valine 51–glycine 71 shows a compositional bias: basic residues.

The protein belongs to the universal ribosomal protein uL4 family. Part of the 50S ribosomal subunit.

One of the primary rRNA binding proteins, this protein initially binds near the 5'-end of the 23S rRNA. It is important during the early stages of 50S assembly. It makes multiple contacts with different domains of the 23S rRNA in the assembled 50S subunit and ribosome. Functionally, forms part of the polypeptide exit tunnel. The chain is Large ribosomal subunit protein uL4 from Lactobacillus delbrueckii subsp. bulgaricus (strain ATCC 11842 / DSM 20081 / BCRC 10696 / JCM 1002 / NBRC 13953 / NCIMB 11778 / NCTC 12712 / WDCM 00102 / Lb 14).